A 427-amino-acid chain; its full sequence is MLLSQYFLPVLKEEPSEAQVTSHKLMLRSGMIRQQAAGIYTWLPLGLKVLKNIENIVSLNMNKAGALEVLMPCIQPAHLWMESGRFNNYGKEMLKFQDRHDNTLLFGPTNEDMITDIFRHNIKSYKDLPKNLYHIQWKFRDEIRPRFGVMRGREFLMKDAYSFDINEENAVKTYNQMYKAYINTFRDLGVFAIPVIADNGPIGGKLSHEFHIIAETGESTIYYDKRFKTLKDNPDIDVDEIKSWYAAAEEKHDINKLPISEQEITSSKGIEVGHIFYIGSKYSVNMKALINDEHGKLAPVEMSSYGIGISRLVAAIIEANCDEKGIIWPFSVAPFKVSLINLNIHDSKCVELAAKAYKDLSDKNIEVLYDDTEARPGSKFATHDLIGSPHQIIIGPKKAANNIVELKDRKSGNIEDIEVENLINYIK.

Belongs to the class-II aminoacyl-tRNA synthetase family. ProS type 2 subfamily. As to quaternary structure, homodimer.

The protein resides in the cytoplasm. It catalyses the reaction tRNA(Pro) + L-proline + ATP = L-prolyl-tRNA(Pro) + AMP + diphosphate. Catalyzes the attachment of proline to tRNA(Pro) in a two-step reaction: proline is first activated by ATP to form Pro-AMP and then transferred to the acceptor end of tRNA(Pro). The polypeptide is Proline--tRNA ligase (Rickettsia akari (strain Hartford)).